The chain runs to 790 residues: Potassium transporter 22 (790 aa).

The Cytoplasmic portion of the chain corresponds to 1 to 64 (MAQQQGQGAG…HGEGWARTLR (64 aa)). The helical transmembrane segment at 65 to 85 (LAFQCFGVLYGDIGTSPLYVY) threads the bilayer. Topologically, residues 86–98 (STTFDGGIRHTDD) are extracellular. The helical transmembrane segment at 99-119 (LLGVLSLIIYSFLLFTIIKYV) threads the bilayer. At 120–198 (YIALRANDDG…DLLENSRPVR (79 aa)) the chain is on the cytoplasmic side. Residues 199-219 (ISLFLLTILATAMVISDACLT) form a helical membrane-spanning segment. Over 220–236 (PAISVLSAVGGLKDKAP) the chain is Extracellular. The helical transmembrane segment at 237–257 (HLNTEQVVWVTVGILVMLFAV) threads the bilayer. At 258 to 264 (QRFGTDK) the chain is on the cytoplasmic side. A helical transmembrane segment spans residues 265–285 (VGYLFAPVVLLWLLLIGGVGV). Over 286–318 (YNLAAHDVGVLRAFNPKYILDYFRRNGRHGWVS) the chain is Extracellular. A helical transmembrane segment spans residues 319–339 (LGGVLLCFTGTEALFADLGCF). Residues 340-345 (SIRSIQ) are Cytoplasmic-facing. The helical transmembrane segment at 346–366 (LSFAFGLVPAVLLAYAGQAAY) threads the bilayer. At 367–385 (LRVYPDHVGDAFYASTPQV) the chain is on the extracellular side. The chain crosses the membrane as a helical span at residues 386–406 (LFWPTLVLALAASVVGSQAMI). At 407 to 437 (SCAFATISHSQAMGCFPRVKVVHTSRQYQGQ) the chain is on the cytoplasmic side. A helical transmembrane segment spans residues 438–458 (VYIPEINLLLGAAACVVTVAA). At 459–469 (RDTVVIGEAHG) the chain is on the extracellular side. A helical transmembrane segment spans residues 470–490 (ICVVLVMLITTLLLTVVMVLV). Residues 491 to 492 (WR) are Cytoplasmic-facing. The chain crosses the membrane as a helical span at residues 493–513 (VNIGWVLVFACVFASTESVYL). Topologically, residues 514–519 (TSVLYK) are extracellular. A helical membrane pass occupies residues 520–540 (FAHGGYIPVAMSAVLMGVMGV). The Cytoplasmic portion of the chain corresponds to 541 to 790 (WHYVHVRRYK…LLKVGMSYEI (250 aa)).

The protein belongs to the HAK/KUP transporter (TC 2.A.72.3) family.

Its subcellular location is the membrane. High-affinity potassium transporter. The protein is Potassium transporter 22 (HAK22) of Oryza sativa subsp. japonica (Rice).